The sequence spans 87 residues: UPF0367 protein SynWH7803_2240 (87 aa).

The protein belongs to the UPF0367 family.

This Synechococcus sp. (strain WH7803) protein is UPF0367 protein SynWH7803_2240.